The following is a 525-amino-acid chain: Cobyric acid synthase (525 aa).

Residues 251-452 (ELEIAVLYLP…FHGIFDNDLL (202 aa)) form the GATase cobBQ-type domain. Cys332 (nucleophile) is an active-site residue. His444 is a catalytic residue.

It belongs to the CobB/CobQ family. CobQ subfamily.

Its pathway is cofactor biosynthesis; adenosylcobalamin biosynthesis. Its function is as follows. Catalyzes amidations at positions B, D, E, and G on adenosylcobyrinic A,C-diamide. NH(2) groups are provided by glutamine, and one molecule of ATP is hydrogenolyzed for each amidation. This is Cobyric acid synthase from Pelotomaculum thermopropionicum (strain DSM 13744 / JCM 10971 / SI).